A 91-amino-acid polypeptide reads, in one-letter code: MNFFTMCMLAAGFGMAIGAFGTGIGQGLAVKSAVEGVSRNPGASGKILTTMMIGLAMIESLAIYVLVVCLIILFANPYKDVAIKALETVAK.

Helical transmembrane passes span 4-24 and 53-73; these read FTMC…GTGI and IGLA…LIIL.

The protein belongs to the ATPase C chain family. As to quaternary structure, F-type ATPases have 2 components, F(1) - the catalytic core - and F(0) - the membrane proton channel. F(1) has five subunits: alpha(3), beta(3), gamma(1), delta(1), epsilon(1). F(0) has three main subunits: a(1), b(2) and c(10-14). The alpha and beta chains form an alternating ring which encloses part of the gamma chain. F(1) is attached to F(0) by a central stalk formed by the gamma and epsilon chains, while a peripheral stalk is formed by the delta and b chains.

The protein resides in the cell inner membrane. Functionally, f(1)F(0) ATP synthase produces ATP from ADP in the presence of a proton or sodium gradient. F-type ATPases consist of two structural domains, F(1) containing the extramembraneous catalytic core and F(0) containing the membrane proton channel, linked together by a central stalk and a peripheral stalk. During catalysis, ATP synthesis in the catalytic domain of F(1) is coupled via a rotary mechanism of the central stalk subunits to proton translocation. In terms of biological role, key component of the F(0) channel; it plays a direct role in translocation across the membrane. A homomeric c-ring of between 10-14 subunits forms the central stalk rotor element with the F(1) delta and epsilon subunits. The protein is ATP synthase subunit c of Trichlorobacter lovleyi (strain ATCC BAA-1151 / DSM 17278 / SZ) (Geobacter lovleyi).